The primary structure comprises 256 residues: MANSKYEYVKSFEQPDILLQNVWIVVRIDGRSFHKFTTKHDYAKPNDDRGLSLMNRAALEVCKEFPDIVIAFGESDEYSFVLKKSCNLFERRSSKISSSIVSYFTSQFVYRWKEYFGEHELKYPPTFDSRCVLYPTDENIKDYLSWRQADTHINNLYNTCYWALVLKAGKTPIEAENELRGTFSDGKNEMLFSRFNINYNNLPAEYRKGSVIFKKPVQETNKETGLTKSKKRLVIEHVDIISEKFWKEYPDILASK.

Aspartate 29, glycine 30, and aspartate 76 together coordinate Mg(2+). GTP-binding positions include 29–34 and 75–76; these read DGRSFH and SD.

This sequence belongs to the tRNA(His) guanylyltransferase family. Mg(2+) is required as a cofactor.

The protein localises to the cytoplasm. The catalysed reaction is a 5'-end ribonucleotide-tRNA(His) + GTP + ATP + H2O = a 5'-end phospho-guanosine-ribonucleotide-tRNA(His) + AMP + 2 diphosphate + H(+). Its function is as follows. Adds a GMP to the 5'-end of tRNA(His) after transcription and RNase P cleavage. The protein is Probable tRNA(His) guanylyltransferase (thg1) of Dictyostelium discoideum (Social amoeba).